The chain runs to 126 residues: Aspartate 1-decarboxylase (126 aa).

The active-site Schiff-base intermediate with substrate; via pyruvic acid is Ser25. Position 25 is a pyruvic acid (Ser) (Ser25). Thr57 provides a ligand contact to substrate. Tyr58 functions as the Proton donor in the catalytic mechanism. 73-75 provides a ligand contact to substrate; the sequence is GAA.

The protein belongs to the PanD family. In terms of assembly, heterooctamer of four alpha and four beta subunits. Requires pyruvate as cofactor. In terms of processing, is synthesized initially as an inactive proenzyme, which is activated by self-cleavage at a specific serine bond to produce a beta-subunit with a hydroxyl group at its C-terminus and an alpha-subunit with a pyruvoyl group at its N-terminus.

It is found in the cytoplasm. The enzyme catalyses L-aspartate + H(+) = beta-alanine + CO2. It participates in cofactor biosynthesis; (R)-pantothenate biosynthesis; beta-alanine from L-aspartate: step 1/1. Catalyzes the pyruvoyl-dependent decarboxylation of aspartate to produce beta-alanine. The sequence is that of Aspartate 1-decarboxylase from Yersinia pestis bv. Antiqua (strain Antiqua).